The chain runs to 393 residues: NAD(P)H-quinone oxidoreductase subunit H, chloroplastic (393 aa).

This sequence belongs to the complex I 49 kDa subunit family. NDH is composed of at least 16 different subunits, 5 of which are encoded in the nucleus.

The protein resides in the plastid. It is found in the chloroplast thylakoid membrane. It carries out the reaction a plastoquinone + NADH + (n+1) H(+)(in) = a plastoquinol + NAD(+) + n H(+)(out). The catalysed reaction is a plastoquinone + NADPH + (n+1) H(+)(in) = a plastoquinol + NADP(+) + n H(+)(out). Functionally, NDH shuttles electrons from NAD(P)H:plastoquinone, via FMN and iron-sulfur (Fe-S) centers, to quinones in the photosynthetic chain and possibly in a chloroplast respiratory chain. The immediate electron acceptor for the enzyme in this species is believed to be plastoquinone. Couples the redox reaction to proton translocation, and thus conserves the redox energy in a proton gradient. This chain is NAD(P)H-quinone oxidoreductase subunit H, chloroplastic, found in Populus alba (White poplar).